Consider the following 270-residue polypeptide: Protoheme IX farnesyltransferase (270 aa).

7 consecutive transmembrane segments (helical) span residues Leu13–Asp30, His33–Leu53, Leu95–Trp115, Leu129–Ala149, Tyr156–Phe176, Leu207–Pro227, and Glu249–Leu269.

This sequence belongs to the UbiA prenyltransferase family. Protoheme IX farnesyltransferase subfamily.

It is found in the cell inner membrane. It carries out the reaction heme b + (2E,6E)-farnesyl diphosphate + H2O = Fe(II)-heme o + diphosphate. The protein operates within porphyrin-containing compound metabolism; heme O biosynthesis; heme O from protoheme: step 1/1. In terms of biological role, converts heme B (protoheme IX) to heme O by substitution of the vinyl group on carbon 2 of heme B porphyrin ring with a hydroxyethyl farnesyl side group. The polypeptide is Protoheme IX farnesyltransferase (Geobacter sulfurreducens (strain ATCC 51573 / DSM 12127 / PCA)).